The sequence spans 154 residues: Large ribosomal subunit protein uL13 (154 aa).

This sequence belongs to the universal ribosomal protein uL13 family. Part of the 50S ribosomal subunit.

Its function is as follows. This protein is one of the early assembly proteins of the 50S ribosomal subunit, although it is not seen to bind rRNA by itself. It is important during the early stages of 50S assembly. This Rhizobium johnstonii (strain DSM 114642 / LMG 32736 / 3841) (Rhizobium leguminosarum bv. viciae) protein is Large ribosomal subunit protein uL13.